A 384-amino-acid polypeptide reads, in one-letter code: 2-isopropylmalate synthase 2 (384 aa).

A Pyruvate carboxyltransferase domain is found at 9 to 260 (VYIVDTTLRD…DLGIDTSRFR (252 aa)). Residues Asp-18, His-198, His-200, and Asn-234 each contribute to the Mn(2+) site.

It belongs to the alpha-IPM synthase/homocitrate synthase family. LeuA type 1 subfamily. In terms of assembly, homodimer. Requires Mn(2+) as cofactor.

It is found in the cytoplasm. It catalyses the reaction 3-methyl-2-oxobutanoate + acetyl-CoA + H2O = (2S)-2-isopropylmalate + CoA + H(+). The protein operates within amino-acid biosynthesis; L-leucine biosynthesis; L-leucine from 3-methyl-2-oxobutanoate: step 1/4. In terms of biological role, catalyzes the condensation of the acetyl group of acetyl-CoA with 3-methyl-2-oxobutanoate (2-ketoisovalerate) to form 3-carboxy-3-hydroxy-4-methylpentanoate (2-isopropylmalate). The protein is 2-isopropylmalate synthase 2 of Caldanaerobacter subterraneus subsp. tengcongensis (strain DSM 15242 / JCM 11007 / NBRC 100824 / MB4) (Thermoanaerobacter tengcongensis).